We begin with the raw amino-acid sequence, 348 residues long: Dihydroorotase (348 aa).

The Zn(2+) site is built by His17 and His19. Substrate is bound by residues 19 to 21 and Asn45; that span reads HLR. Positions 103, 140, and 178 each coordinate Zn(2+). Lys103 bears the N6-carboxylysine mark. Residue His140 participates in substrate binding. Leu223 contacts substrate. Asp251 contacts Zn(2+). Residue Asp251 is part of the active site. 2 residues coordinate substrate: His255 and Ala267.

The protein belongs to the metallo-dependent hydrolases superfamily. DHOase family. Class II DHOase subfamily. In terms of assembly, homodimer. Requires Zn(2+) as cofactor.

It carries out the reaction (S)-dihydroorotate + H2O = N-carbamoyl-L-aspartate + H(+). The protein operates within pyrimidine metabolism; UMP biosynthesis via de novo pathway; (S)-dihydroorotate from bicarbonate: step 3/3. In terms of biological role, catalyzes the reversible cyclization of carbamoyl aspartate to dihydroorotate. The polypeptide is Dihydroorotase (Yersinia enterocolitica serotype O:8 / biotype 1B (strain NCTC 13174 / 8081)).